A 299-amino-acid polypeptide reads, in one-letter code: Diaminopimelate epimerase (299 aa).

Substrate is bound by residues Asn-13, Gln-46, and Asn-66. Catalysis depends on Cys-75, which acts as the Proton donor. Residues 76 to 77, Asn-166, Asn-199, and 217 to 218 each bind substrate; these read GN and ER. Cys-226 acts as the Proton acceptor in catalysis. Residue 227–228 coordinates substrate; it reads GT.

This sequence belongs to the diaminopimelate epimerase family. Homodimer.

The protein localises to the cytoplasm. It carries out the reaction (2S,6S)-2,6-diaminopimelate = meso-2,6-diaminopimelate. Its pathway is amino-acid biosynthesis; L-lysine biosynthesis via DAP pathway; DL-2,6-diaminopimelate from LL-2,6-diaminopimelate: step 1/1. Functionally, catalyzes the stereoinversion of LL-2,6-diaminopimelate (L,L-DAP) to meso-diaminopimelate (meso-DAP), a precursor of L-lysine and an essential component of the bacterial peptidoglycan. This Paraburkholderia phytofirmans (strain DSM 17436 / LMG 22146 / PsJN) (Burkholderia phytofirmans) protein is Diaminopimelate epimerase.